A 901-amino-acid chain; its full sequence is Viral-enhancing factor (901 aa).

The 304-residue stretch at 27-330 (HRRTEVGVVL…IFTWLYNPQR (304 aa)) folds into the Peptidase M60 domain. Asn-65, Asn-265, Asn-339, Asn-349, Asn-540, Asn-594, Asn-595, Asn-642, Asn-683, and Asn-698 each carry an N-linked (GlcNAc...) asparagine; by host glycan.

Involved in disruption of the peritrophic membrane and fusion of nucleocapsids with midgut cells. This is Viral-enhancing factor (VEF) from Trichoplusia ni (Cabbage looper).